The primary structure comprises 270 residues: Probable ribosomal RNA small subunit methyltransferase A (270 aa).

His-19, Leu-21, Gly-46, Glu-67, Asp-92, and Asn-107 together coordinate S-adenosyl-L-methionine.

It belongs to the class I-like SAM-binding methyltransferase superfamily. rRNA adenine N(6)-methyltransferase family. RsmA subfamily.

It is found in the cytoplasm. Functionally, specifically dimethylates two adjacent adenosines in the loop of a conserved hairpin near the 3'-end of 16S rRNA in the 30S particle. May play a critical role in biogenesis of 30S subunits. This is Probable ribosomal RNA small subunit methyltransferase A from Methanococcoides burtonii (strain DSM 6242 / NBRC 107633 / OCM 468 / ACE-M).